The sequence spans 140 residues: C-type lectin 6 (140 aa).

Positions M1 to A23 are cleaved as a signal peptide. Disulfide bonds link C25–C36, C53–C138, and C115–C130. The 108-residue stretch at Y32–K139 folds into the C-type lectin domain.

Belongs to the snaclec family. As to quaternary structure, heteromultimer; disulfide-linked. Expressed by the venom gland.

It localises to the secreted. In terms of biological role, interferes with one step of hemostasis (modulation of platelet aggregation, or coagulation cascade, for example). The polypeptide is C-type lectin 6 (Crotalus adamanteus (Eastern diamondback rattlesnake)).